The following is a 460-amino-acid chain: tRNA(Ile)-lysidine synthase (460 aa).

30–35 contributes to the ATP binding site; the sequence is SGGLDS.

This sequence belongs to the tRNA(Ile)-lysidine synthase family.

The protein resides in the cytoplasm. The enzyme catalyses cytidine(34) in tRNA(Ile2) + L-lysine + ATP = lysidine(34) in tRNA(Ile2) + AMP + diphosphate + H(+). Ligates lysine onto the cytidine present at position 34 of the AUA codon-specific tRNA(Ile) that contains the anticodon CAU, in an ATP-dependent manner. Cytidine is converted to lysidine, thus changing the amino acid specificity of the tRNA from methionine to isoleucine. This Yersinia pseudotuberculosis serotype I (strain IP32953) protein is tRNA(Ile)-lysidine synthase.